The following is a 104-amino-acid chain: Large ribosomal subunit protein uL24 (104 aa).

Belongs to the universal ribosomal protein uL24 family. Part of the 50S ribosomal subunit.

In terms of biological role, one of two assembly initiator proteins, it binds directly to the 5'-end of the 23S rRNA, where it nucleates assembly of the 50S subunit. Functionally, one of the proteins that surrounds the polypeptide exit tunnel on the outside of the subunit. This chain is Large ribosomal subunit protein uL24, found in Baumannia cicadellinicola subsp. Homalodisca coagulata.